A 139-amino-acid polypeptide reads, in one-letter code: D-ribose pyranase (139 aa).

H20 functions as the Proton donor in the catalytic mechanism. Residues D28, H106, and 128-130 (YAN) contribute to the substrate site.

Belongs to the RbsD / FucU family. RbsD subfamily. Homodecamer.

Its subcellular location is the cytoplasm. The catalysed reaction is beta-D-ribopyranose = beta-D-ribofuranose. The protein operates within carbohydrate metabolism; D-ribose degradation; D-ribose 5-phosphate from beta-D-ribopyranose: step 1/2. Catalyzes the interconversion of beta-pyran and beta-furan forms of D-ribose. The chain is D-ribose pyranase from Shewanella halifaxensis (strain HAW-EB4).